Here is a 103-residue protein sequence, read N- to C-terminus: Large ribosomal subunit protein bL21 (103 aa).

This sequence belongs to the bacterial ribosomal protein bL21 family. Part of the 50S ribosomal subunit. Contacts protein L20.

This protein binds to 23S rRNA in the presence of protein L20. The protein is Large ribosomal subunit protein bL21 of Legionella pneumophila (strain Paris).